Reading from the N-terminus, the 344-residue chain is RNA-binding protein squid (344 aa).

The interval 1 to 55 (MAENKQVDTEINGEDFTKDVTADGPGSENGDAGAAGSTNGSSDNQSAASGQRDDD) is disordered. The span at 36-49 (GSTNGSSDNQSAAS) shows a compositional bias: polar residues. RRM domains are found at residues 56-138 (RKLF…HGKI) and 136-213 (GKIF…RATP). A Phosphoserine modification is found at Ser-148. Disordered regions lie at residues 214–238 (KPENQMMGGMRGGPRGGMRGGRGGY) and 301–344 (GGGG…HQPY). The tract at residues 215 to 254 (PENQMMGGMRGGPRGGMRGGRGGYGGRGGYNNQWDGQGSY) is M9-like motif. Gly residues-rich tracts occupy residues 222 to 238 (GMRGGPRGGMRGGRGGY) and 301 to 337 (GGGGGNMGGGRGGPRGGGGPKGGGGFNGGKQRGGGGR). The segment at 300–338 (GGGGGGNMGGGRGGPRGGGGPKGGGGFNGGKQRGGGGRQ) is M9 motif.

Interacts with bru1/Bruno; the interaction is direct but weak, and may play a role in regulation of grk mRNA localization and translation. As to quaternary structure, interacts (probably via M9 and M9-like motifs) with Tnpo/Transportin; the interaction is direct and is involved in nuclear localization. Interacts with fs(1)K10 (via N-terminus); may be involved in localization of sqd in the oocyte during oogenesis. In terms of assembly, interacts (via C-terminus) with Hrb27C; the interaction is RNA dependent. Does not interact with Tnpo/Transportin. Interacts with fs(1)K10 (via N-terminus); may be involved in localization of sqd in the oocyte during oogenesis. Interacts (probably via M9-like motif) with Tnpo/Transportin; the interaction is direct and is involved in nuclear localization. Interacts with fs(1)K10 (via N-terminus); may be involved in localization of sqd in the oocyte during oogenesis.

Its subcellular location is the nucleus. The protein localises to the cytoplasm. Its function is as follows. Component of ribonucleosomes. Could be needed to organize a concentration gradient of a dorsalizing morphogen (Dm) originating in the germinal vesicle. At least one of the isoforms is essential in somatic tissues. Interacts with grk mRNA (via 3' UTR) and involved in its localization to the dorsal anterior region of the oocyte during dorsal-ventral axis determination; may function as a ribonuclear protein complex together with otu and Hrb27C. Required for polytene chromosome dispersal in nurse cells during oogenesis; nuclear isoforms play a greater role in this than cytoplasmic isoforms. In terms of biological role, required nonredundantly with isoform A/sqdA for dorsoventral pattern determination during oogenesis. May be important in somatic tissues. Required nonredundantly with isoform B/SqdS for dorsoventral pattern determination during oogenesis. Functionally, may lack a role in dorsoventral pattern determination during oogenesis. May be important in somatic tissues. The chain is RNA-binding protein squid from Drosophila melanogaster (Fruit fly).